Here is a 516-residue protein sequence, read N- to C-terminus: Gamma-aminobutyrate transaminase 1, mitochondrial (516 aa).

A mitochondrion-targeting transit peptide spans 1–47 (MVIARGLLRSNASSSSSQAINLLKYVTSTGSLQGHTQNLCDASTRHF). 171–172 (GS) is a pyridoxal 5'-phosphate binding site. Y204 contributes to the substrate binding site. Pyridoxal 5'-phosphate is bound at residue D311. Position 340 (K340) interacts with substrate. K340 bears the N6-(pyridoxal phosphate)lysine mark.

It belongs to the class-III pyridoxal-phosphate-dependent aminotransferase family. As to expression, expressed in roots, stems and panicles.

It is found in the mitochondrion. The catalysed reaction is 4-aminobutanoate + pyruvate = succinate semialdehyde + L-alanine. It carries out the reaction 4-aminobutanoate + glyoxylate = succinate semialdehyde + glycine. Its function is as follows. Transaminase that degrades gamma-amino butyric acid (GABA) and uses pyruvate as amino-group acceptor, but not 2-oxoglutarate. Not involved in the interaction with blast fungus. This Oryza sativa subsp. japonica (Rice) protein is Gamma-aminobutyrate transaminase 1, mitochondrial (OSL2).